The following is a 330-amino-acid chain: Phosphate acyltransferase (330 aa).

It belongs to the PlsX family. In terms of assembly, homodimer. Probably interacts with PlsY.

Its subcellular location is the cytoplasm. The enzyme catalyses a fatty acyl-[ACP] + phosphate = an acyl phosphate + holo-[ACP]. It functions in the pathway lipid metabolism; phospholipid metabolism. Catalyzes the reversible formation of acyl-phosphate (acyl-PO(4)) from acyl-[acyl-carrier-protein] (acyl-ACP). This enzyme utilizes acyl-ACP as fatty acyl donor, but not acyl-CoA. The protein is Phosphate acyltransferase of Bacillus cereus (strain G9842).